Consider the following 540-residue polypeptide: MQLTVWTYEGPPHVGAMRVATGMEKLHYVLHAPQGDTYADLLFTMIERRNKRPPVTYTTFAARDLGKDTAELFMSAARNAYARFKPQAMIVGASCTGSLIQDDPGGLAKSLGFSIPVIPIDLPAYQRKENWGASETFYQLVRAIAGPKAPAPGTKRPERAAGQRAKCNLLGPTALGFRHRDDITEITRLLGQLGIDVNVVAPMGATPADLTRLGEADFNVVLYPEVASQAASWLQRIFHQPFTKTIPIGVSATREFVREVAGLAGVDPEPVLAAASTRLPWYSHSVDSTYLTNKRVFIFGDATHAIASARIASEELGFKVVGLGTYSREFGRDVREAAAKYGVEALITDDYLEVEAKVAELHPELVLGTQMERHIAKRLGVPCAVISAPVHVQDFPARYAPQMGFEGANVIFDTWVHPLMMGLEEHLLAMFKDDFEFKDGALPSHLGTGHAPASAPAAAEVAVALPQSAPVLDGAASNPAPVATAPTGAVWAPEAEKELLKIPFFVRGKARRNTERFANENGVATITVETLYDAKAHFAR.

Asp-36 lines the [4Fe-4S] cluster pocket. Residue Asp-287 is the Proton donor of the active site. A substrate-binding site is contributed by 422–423 (GL).

Belongs to the ChlB/BchB/BchZ family. As to quaternary structure, protochlorophyllide reductase is composed of three subunits; BchL, BchN and BchB. Forms a heterotetramer of two BchB and two BchN subunits. [4Fe-4S] cluster is required as a cofactor.

It catalyses the reaction chlorophyllide a + oxidized 2[4Fe-4S]-[ferredoxin] + 2 ADP + 2 phosphate = protochlorophyllide a + reduced 2[4Fe-4S]-[ferredoxin] + 2 ATP + 2 H2O. It functions in the pathway porphyrin-containing compound metabolism; bacteriochlorophyll biosynthesis (light-independent). Its function is as follows. Component of the dark-operative protochlorophyllide reductase (DPOR) that uses Mg-ATP and reduced ferredoxin to reduce ring D of protochlorophyllide (Pchlide) to form chlorophyllide a (Chlide). This reaction is light-independent. The NB-protein (BchN-BchB) is the catalytic component of the complex. This chain is Light-independent protochlorophyllide reductase subunit B, found in Rhodopseudomonas palustris (strain TIE-1).